The primary structure comprises 359 residues: Prostaglandin F2-alpha receptor (359 aa).

The Extracellular portion of the chain corresponds to 1–31 (MSMNNSKQLVSPAAALLSNTTCQTENRLSVF). 2 N-linked (GlcNAc...) asparagine glycosylation sites follow: Asn-4 and Asn-19. A helical membrane pass occupies residues 32–54 (FSVIFMTVGILSNSLAIAILMKA). At 55-69 (YQRFRQKSKASFLLL) the chain is on the cytoplasmic side. Residues 70 to 90 (ASGLVITDFFGHLINGAIAVF) traverse the membrane as a helical segment. Topologically, residues 91-109 (VYASDKEWIRFDQSNVLCS) are extracellular. Cys-108 and Cys-186 are joined by a disulfide. The chain crosses the membrane as a helical span at residues 110 to 131 (IFGICMVFSGLCPLLLGSVMAI). The Cytoplasmic portion of the chain corresponds to 132–152 (ERCIGVTKPIFHSTKITSKHV). The chain crosses the membrane as a helical span at residues 153-175 (KMMLSGVCLFAVFIALLPILGHR). The Extracellular portion of the chain corresponds to 176-198 (DYKIQASRTWCFYNTEDIKDWED). A helical transmembrane segment spans residues 199–224 (RFYLLLFSFLGLLALGVSLLCNAITG). At 225-250 (ITLLRVKFKSQQHRQGRSHHLEMVIQ) the chain is on the cytoplasmic side. Residues 251–267 (LLAIMCVSCICWSPFLV) form a helical membrane-spanning segment. Over 268–285 (TMANIGINGNHSLETCET) the chain is Extracellular. Residues 286–307 (TLFALRMATWNQILDPWVYILL) traverse the membrane as a helical segment. Over 308-359 (RKAVLKNLYKLASQCCGVHVISLHIWELSSIKNSLKVAAISESPVAEKSAST) the chain is Cytoplasmic.

The protein belongs to the G-protein coupled receptor 1 family. In terms of assembly, isoform 1 can form heterodimers with isoform 5 (and probably other isoforms). Eye.

It localises to the cell membrane. In terms of biological role, receptor for prostaglandin F2-alpha (PGF2-alpha). The activity of this receptor is mediated by G proteins which activate a phosphatidylinositol-calcium second messenger system. Initiates luteolysis in the corpus luteum. Isoforms 2 to 7 do not bind PGF2-alpha but are proposed to modulate signaling by participating in variant receptor complexes; heterodimers between isoform 1 and isoform 5 are proposed to be a receptor for prostamides including the synthetic analog bimatoprost. The polypeptide is Prostaglandin F2-alpha receptor (PTGFR) (Homo sapiens (Human)).